The following is a 450-amino-acid chain: Bifunctional apoptosis regulator (450 aa).

Residues 1–24 form a disordered region; it reads MEEPQKNDLSMRGQEEDHPVRSSG. Over 1 to 140 the chain is Cytoplasmic; sequence MEEPQKNDLS…PSTGRVNQQR (140 aa). An RING-type zinc finger spans residues 34-74; the sequence is CHCCYDTLVNPTTLNCGHSFCRHCLALWWMSSKKTECPECR. Residues 141 to 161 form a helical membrane-spanning segment; it reads GGGFFSGVLTALTGVAVILLV. Residues 162-331 are Extracellular-facing; that stretch reads YHWRSRESEH…REPTWKQWRE (170 aa). The region spanning 182-249 is the SAM domain; it reads WTTEEVVLWL…LMELERVRAL (68 aa). N-linked (GlcNAc...) asparagine glycosylation is present at asparagine 232. The helical transmembrane segment at 332 to 352 threads the bilayer; that stretch reads FLIKYSFLPYQLIAEFAWDWL. Topologically, residues 353-360 are cytoplasmic; sequence EVHYWTSR. Residues 361 to 381 traverse the membrane as a helical segment; that stretch reads FLIVNAMLLSVLELFSFWRIW. Topologically, residues 382 to 404 are extracellular; the sequence is SRSELKTVPQRMWSHFWKVSTQG. A helical transmembrane segment spans residues 405–425; sequence LFMAMFWPLIPQFVCNCLFYW. Over 426-450 the chain is Cytoplasmic; that stretch reads ALYFNPIINIDLVVKEIRRLETQVF.

Interacts with CASP8, BCL2 and BCL2L1 through SAM domain and also with HIP1, IFT57, ESRRBL1 and BCAP31. Interacts with NGFR; this interaction inhibits NF-kappa-B and JNK-related signaling pathways. Post-translationally, mediates RING-dependent self-ubiquitination leading to proteasomal degradation.

Its subcellular location is the endoplasmic reticulum membrane. It carries out the reaction S-ubiquitinyl-[E2 ubiquitin-conjugating enzyme]-L-cysteine + [acceptor protein]-L-lysine = [E2 ubiquitin-conjugating enzyme]-L-cysteine + N(6)-ubiquitinyl-[acceptor protein]-L-lysine.. Its function is as follows. Membrane-bound E3 ubiquitin ligase that plays a role in several processes including apoptosis regulation or reticulum endoplasmic stress. Has anti-apoptotic activity, both for apoptosis triggered via death-receptors and via mitochondrial factors. Contributes to the dynamic control of IRE1/ERN1 signaling during ER stress by inducing BAX inhibitor 1/TMBIM6 proteasomal degradation. Promotes the activation of TGF-beta signaling by mediating the 'Lys-63'-linked ubiquitination of TGFBR1 which is critical to activate the pathway. Together with NGFR, negatively regulates NF-kappa-B and JNK-related signaling pathways. Promotes the proteasome-mediated degradation of PNPLA3, a protein involveld in lipid metabolism. This Rattus norvegicus (Rat) protein is Bifunctional apoptosis regulator (Bfar).